A 144-amino-acid chain; its full sequence is D-aminoacyl-tRNA deacylase (144 aa).

The Gly-cisPro motif, important for rejection of L-amino acids signature appears at 136–137 (GP).

The protein belongs to the DTD family. Homodimer.

Its subcellular location is the cytoplasm. It carries out the reaction glycyl-tRNA(Ala) + H2O = tRNA(Ala) + glycine + H(+). The enzyme catalyses a D-aminoacyl-tRNA + H2O = a tRNA + a D-alpha-amino acid + H(+). An aminoacyl-tRNA editing enzyme that deacylates mischarged D-aminoacyl-tRNAs. Also deacylates mischarged glycyl-tRNA(Ala), protecting cells against glycine mischarging by AlaRS. Acts via tRNA-based rather than protein-based catalysis; rejects L-amino acids rather than detecting D-amino acids in the active site. By recycling D-aminoacyl-tRNA to D-amino acids and free tRNA molecules, this enzyme counteracts the toxicity associated with the formation of D-aminoacyl-tRNA entities in vivo and helps enforce protein L-homochirality. The chain is D-aminoacyl-tRNA deacylase from Actinobacillus succinogenes (strain ATCC 55618 / DSM 22257 / CCUG 43843 / 130Z).